Here is a 163-residue protein sequence, read N- to C-terminus: Protein-export protein SecB (163 aa).

Belongs to the SecB family. Homotetramer, a dimer of dimers. One homotetramer interacts with 1 SecA dimer.

The protein resides in the cytoplasm. In terms of biological role, one of the proteins required for the normal export of preproteins out of the cell cytoplasm. It is a molecular chaperone that binds to a subset of precursor proteins, maintaining them in a translocation-competent state. It also specifically binds to its receptor SecA. The polypeptide is Protein-export protein SecB (Brucella anthropi (strain ATCC 49188 / DSM 6882 / CCUG 24695 / JCM 21032 / LMG 3331 / NBRC 15819 / NCTC 12168 / Alc 37) (Ochrobactrum anthropi)).